A 280-amino-acid polypeptide reads, in one-letter code: Cis-2,3-dihydrobiphenyl-2,3-diol dehydrogenase (280 aa).

9–33 is a binding site for NAD(+); it reads LVTGGCAGLGRAIVDRFVCEGARVA. Ser-142 provides a ligand contact to substrate. Residue Tyr-155 is the Proton acceptor of the active site.

Belongs to the short-chain dehydrogenases/reductases (SDR) family.

The enzyme catalyses (2R,3S)-3-phenylcyclohexa-3,5-diene-1,2-diol + NAD(+) = biphenyl-2,3-diol + NADH + H(+). It functions in the pathway xenobiotic degradation; biphenyl degradation; 2-hydroxy-2,4-pentadienoate and benzoate from biphenyl: step 2/4. The protein is Cis-2,3-dihydrobiphenyl-2,3-diol dehydrogenase (bphB) of Rhodococcus globerulus.